Reading from the N-terminus, the 536-residue chain is Formate--tetrahydrofolate ligase (536 aa).

51 to 58 serves as a coordination point for ATP; sequence TPAGEGKT.

It belongs to the formate--tetrahydrofolate ligase family.

The catalysed reaction is (6S)-5,6,7,8-tetrahydrofolate + formate + ATP = (6R)-10-formyltetrahydrofolate + ADP + phosphate. It functions in the pathway one-carbon metabolism; tetrahydrofolate interconversion. This is Formate--tetrahydrofolate ligase from Thermoplasma acidophilum (strain ATCC 25905 / DSM 1728 / JCM 9062 / NBRC 15155 / AMRC-C165).